We begin with the raw amino-acid sequence, 176 residues long: DNA-directed RNA polymerase II subunit 7 (176 aa).

The protein belongs to the eukaryotic RPB7/RPC8 RNA polymerase subunit family. As to quaternary structure, component of the RNA polymerase II complex consisting of at least 12 subunits. Interacts with NRPB4.

It is found in the nucleus. In terms of biological role, DNA-dependent RNA polymerase catalyzes the transcription of DNA into RNA using the four ribonucleoside triphosphates as substrates. Component of RNA polymerase II which synthesizes mRNA precursors and many functional non-coding RNAs. Pol II is the central component of the basal RNA polymerase II transcription machinery. It is composed of mobile elements that move relative to each other. NRPB7 is part of a subcomplex with NRPB4 that binds to a pocket formed by NRPB1, NRPB2 and NRPB6 at the base of the clamp element. The NRBP4-NRPB7 subcomplex seems to lock the clamp via NRPB7 in the closed conformation thus preventing double-stranded DNA to enter the active site cleft. The NRPB4-NRPB7 subcomplex binds single-stranded DNA and RNA. The sequence is that of DNA-directed RNA polymerase II subunit 7 (NRPB7) from Arabidopsis thaliana (Mouse-ear cress).